A 471-amino-acid polypeptide reads, in one-letter code: Adenosylhomocysteinase (471 aa).

Substrate contacts are provided by threonine 60, aspartate 135, and glutamate 196. 197-199 serves as a coordination point for NAD(+); that stretch reads TTT. Substrate contacts are provided by lysine 226 and aspartate 230. Residues asparagine 231, 260–265, glutamate 283, asparagine 318, 339–341, and asparagine 387 each bind NAD(+); these read GYGDVG and IGH.

This sequence belongs to the adenosylhomocysteinase family. NAD(+) serves as cofactor.

The protein localises to the cytoplasm. The enzyme catalyses S-adenosyl-L-homocysteine + H2O = L-homocysteine + adenosine. The protein operates within amino-acid biosynthesis; L-homocysteine biosynthesis; L-homocysteine from S-adenosyl-L-homocysteine: step 1/1. Functionally, may play a key role in the regulation of the intracellular concentration of adenosylhomocysteine. This Chlorobium phaeovibrioides (strain DSM 265 / 1930) (Prosthecochloris vibrioformis (strain DSM 265)) protein is Adenosylhomocysteinase.